Here is a 616-residue protein sequence, read N- to C-terminus: Chaperone protein HscA (616 aa).

It belongs to the heat shock protein 70 family.

Chaperone involved in the maturation of iron-sulfur cluster-containing proteins. Has a low intrinsic ATPase activity which is markedly stimulated by HscB. Involved in the maturation of IscU. This is Chaperone protein HscA from Klebsiella pneumoniae (strain 342).